The chain runs to 250 residues: Pyrroloquinoline-quinone synthase (250 aa).

The protein belongs to the PqqC family.

The catalysed reaction is 6-(2-amino-2-carboxyethyl)-7,8-dioxo-1,2,3,4,7,8-hexahydroquinoline-2,4-dicarboxylate + 3 O2 = pyrroloquinoline quinone + 2 H2O2 + 2 H2O + H(+). It functions in the pathway cofactor biosynthesis; pyrroloquinoline quinone biosynthesis. Its function is as follows. Ring cyclization and eight-electron oxidation of 3a-(2-amino-2-carboxyethyl)-4,5-dioxo-4,5,6,7,8,9-hexahydroquinoline-7,9-dicarboxylic-acid to PQQ. The chain is Pyrroloquinoline-quinone synthase from Xanthomonas oryzae pv. oryzae (strain PXO99A).